The chain runs to 624 residues: tRNA uridine 5-carboxymethylaminomethyl modification enzyme MnmG (624 aa).

Residues glycine 16–glycine 21, valine 128, and serine 183 each bind FAD. Glycine 275–phenylalanine 289 provides a ligand contact to NAD(+). Residue glutamine 372 participates in FAD binding.

The protein belongs to the MnmG family. As to quaternary structure, homodimer. Heterotetramer of two MnmE and two MnmG subunits. FAD serves as cofactor.

Its subcellular location is the cytoplasm. In terms of biological role, NAD-binding protein involved in the addition of a carboxymethylaminomethyl (cmnm) group at the wobble position (U34) of certain tRNAs, forming tRNA-cmnm(5)s(2)U34. The sequence is that of tRNA uridine 5-carboxymethylaminomethyl modification enzyme MnmG from Geobacter metallireducens (strain ATCC 53774 / DSM 7210 / GS-15).